A 247-amino-acid chain; its full sequence is Type III pantothenate kinase (247 aa).

7–14 (AIGNSRWH) serves as a coordination point for ATP. Substrate is bound by residues Tyr91 and 95-98 (GLDR). Catalysis depends on Asp97, which acts as the Proton acceptor. Asp117 contacts K(+). Thr120 serves as a coordination point for ATP. Thr172 is a binding site for substrate.

It belongs to the type III pantothenate kinase family. In terms of assembly, homodimer. Requires NH4(+) as cofactor. The cofactor is K(+).

The protein localises to the cytoplasm. The enzyme catalyses (R)-pantothenate + ATP = (R)-4'-phosphopantothenate + ADP + H(+). The protein operates within cofactor biosynthesis; coenzyme A biosynthesis; CoA from (R)-pantothenate: step 1/5. Its function is as follows. Catalyzes the phosphorylation of pantothenate (Pan), the first step in CoA biosynthesis. This is Type III pantothenate kinase from Synechococcus elongatus (strain ATCC 33912 / PCC 7942 / FACHB-805) (Anacystis nidulans R2).